The chain runs to 430 residues: Serine--tRNA ligase (430 aa).

237–239 contributes to the L-serine binding site; sequence TAE. 268 to 270 contributes to the ATP binding site; sequence RSE. L-serine is bound at residue glutamate 291. 355-358 contributes to the ATP binding site; the sequence is EISS. Position 391 (serine 391) interacts with L-serine.

It belongs to the class-II aminoacyl-tRNA synthetase family. Type-1 seryl-tRNA synthetase subfamily. In terms of assembly, homodimer. The tRNA molecule binds across the dimer.

It localises to the cytoplasm. It carries out the reaction tRNA(Ser) + L-serine + ATP = L-seryl-tRNA(Ser) + AMP + diphosphate + H(+). The enzyme catalyses tRNA(Sec) + L-serine + ATP = L-seryl-tRNA(Sec) + AMP + diphosphate + H(+). It functions in the pathway aminoacyl-tRNA biosynthesis; selenocysteinyl-tRNA(Sec) biosynthesis; L-seryl-tRNA(Sec) from L-serine and tRNA(Sec): step 1/1. Catalyzes the attachment of serine to tRNA(Ser). Is also able to aminoacylate tRNA(Sec) with serine, to form the misacylated tRNA L-seryl-tRNA(Sec), which will be further converted into selenocysteinyl-tRNA(Sec). This Salmonella enteritidis PT4 (strain P125109) protein is Serine--tRNA ligase.